The sequence spans 346 residues: Holliday junction branch migration complex subunit RuvB (346 aa).

Residues 1–182 (MSEAARLIAP…FGIPVRLNFY (182 aa)) are large ATPase domain (RuvB-L). ATP is bound by residues Arg22, Gly63, Lys66, Thr67, Thr68, 129-131 (EDF), Arg172, Tyr182, and Arg219. Thr67 provides a ligand contact to Mg(2+). Residues 183 to 253 (TVEELELIVR…IADEALTRLL (71 aa)) are small ATPAse domain (RuvB-S). Residues 256 to 346 (SMGLDQLDRR…SQFRLTLEDD (91 aa)) are head domain (RuvB-H). Arg292, Arg311, and Arg316 together coordinate DNA.

This sequence belongs to the RuvB family. In terms of assembly, homohexamer. Forms an RuvA(8)-RuvB(12)-Holliday junction (HJ) complex. HJ DNA is sandwiched between 2 RuvA tetramers; dsDNA enters through RuvA and exits via RuvB. An RuvB hexamer assembles on each DNA strand where it exits the tetramer. Each RuvB hexamer is contacted by two RuvA subunits (via domain III) on 2 adjacent RuvB subunits; this complex drives branch migration. In the full resolvosome a probable DNA-RuvA(4)-RuvB(12)-RuvC(2) complex forms which resolves the HJ.

It is found in the cytoplasm. The catalysed reaction is ATP + H2O = ADP + phosphate + H(+). The RuvA-RuvB-RuvC complex processes Holliday junction (HJ) DNA during genetic recombination and DNA repair, while the RuvA-RuvB complex plays an important role in the rescue of blocked DNA replication forks via replication fork reversal (RFR). RuvA specifically binds to HJ cruciform DNA, conferring on it an open structure. The RuvB hexamer acts as an ATP-dependent pump, pulling dsDNA into and through the RuvAB complex. RuvB forms 2 homohexamers on either side of HJ DNA bound by 1 or 2 RuvA tetramers; 4 subunits per hexamer contact DNA at a time. Coordinated motions by a converter formed by DNA-disengaged RuvB subunits stimulates ATP hydrolysis and nucleotide exchange. Immobilization of the converter enables RuvB to convert the ATP-contained energy into a lever motion, pulling 2 nucleotides of DNA out of the RuvA tetramer per ATP hydrolyzed, thus driving DNA branch migration. The RuvB motors rotate together with the DNA substrate, which together with the progressing nucleotide cycle form the mechanistic basis for DNA recombination by continuous HJ branch migration. Branch migration allows RuvC to scan DNA until it finds its consensus sequence, where it cleaves and resolves cruciform DNA. This chain is Holliday junction branch migration complex subunit RuvB, found in Rhizobium meliloti (strain 1021) (Ensifer meliloti).